A 284-amino-acid chain; its full sequence is MEINVAKRTGFCSGVQKTYNEVKNSLVDKNKIYIYGELVHNRKVIEELNSAGAITITGMDDIPDDSIDETLIIRAHGISKAEKDLLKKRFSKVIDMTCPIVTNLVKYVEKKQKDGFFVVVYGKPDHPEILGLKGNVDESKLLITLSPVTIPQKKVLIVSQTTMGEEEYKNFITSILTINSFTEVLIRDTICSETILREKETLELSQKSTLMLVLGGKNSSNTQKLYRISKKYCKRTYHIESGEELKEITISPQDKIGIVTGSSTPTSELNKVLEYLSQEKEDFS.

A [4Fe-4S] cluster-binding site is contributed by Cys-12. Residues His-40 and His-76 each coordinate (2E)-4-hydroxy-3-methylbut-2-enyl diphosphate. Dimethylallyl diphosphate contacts are provided by His-40 and His-76. Isopentenyl diphosphate-binding residues include His-40 and His-76. Position 98 (Cys-98) interacts with [4Fe-4S] cluster. His-126 contributes to the (2E)-4-hydroxy-3-methylbut-2-enyl diphosphate binding site. His-126 provides a ligand contact to dimethylallyl diphosphate. His-126 is an isopentenyl diphosphate binding site. Glu-128 (proton donor) is an active-site residue. Position 161 (Thr-161) interacts with (2E)-4-hydroxy-3-methylbut-2-enyl diphosphate. Residue Cys-191 participates in [4Fe-4S] cluster binding. (2E)-4-hydroxy-3-methylbut-2-enyl diphosphate contacts are provided by Ser-219, Ser-220, Asn-221, and Ser-263. Dimethylallyl diphosphate contacts are provided by Ser-219, Ser-220, Asn-221, and Ser-263. Residues Ser-219, Ser-220, Asn-221, and Ser-263 each coordinate isopentenyl diphosphate.

This sequence belongs to the IspH family. It depends on [4Fe-4S] cluster as a cofactor.

The enzyme catalyses isopentenyl diphosphate + 2 oxidized [2Fe-2S]-[ferredoxin] + H2O = (2E)-4-hydroxy-3-methylbut-2-enyl diphosphate + 2 reduced [2Fe-2S]-[ferredoxin] + 2 H(+). The catalysed reaction is dimethylallyl diphosphate + 2 oxidized [2Fe-2S]-[ferredoxin] + H2O = (2E)-4-hydroxy-3-methylbut-2-enyl diphosphate + 2 reduced [2Fe-2S]-[ferredoxin] + 2 H(+). It participates in isoprenoid biosynthesis; dimethylallyl diphosphate biosynthesis; dimethylallyl diphosphate from (2E)-4-hydroxy-3-methylbutenyl diphosphate: step 1/1. It functions in the pathway isoprenoid biosynthesis; isopentenyl diphosphate biosynthesis via DXP pathway; isopentenyl diphosphate from 1-deoxy-D-xylulose 5-phosphate: step 6/6. Its function is as follows. Catalyzes the conversion of 1-hydroxy-2-methyl-2-(E)-butenyl 4-diphosphate (HMBPP) into a mixture of isopentenyl diphosphate (IPP) and dimethylallyl diphosphate (DMAPP). Acts in the terminal step of the DOXP/MEP pathway for isoprenoid precursor biosynthesis. This is 4-hydroxy-3-methylbut-2-enyl diphosphate reductase from Petrotoga mobilis (strain DSM 10674 / SJ95).